The sequence spans 225 residues: uncharacterized protein (225 aa).

The next 4 helical transmembrane spans lie at Leu40 to Val60, Leu63 to Phe83, Leu151 to Leu171, and Ile176 to Leu196.

It localises to the membrane. This is an uncharacterized protein from Saccharomyces cerevisiae (strain ATCC 204508 / S288c) (Baker's yeast).